The following is a 129-amino-acid chain: Prefoldin subunit 6 (129 aa).

An N-acetylalanine modification is found at Ala2. An N6-acetyllysine modification is found at Lys21. Position 66 is an N6-acetyllysine; alternate (Lys66). Lys66 participates in a covalent cross-link: Glycyl lysine isopeptide (Lys-Gly) (interchain with G-Cter in SUMO1); alternate. Residue Lys66 forms a Glycyl lysine isopeptide (Lys-Gly) (interchain with G-Cter in SUMO2); alternate linkage.

Belongs to the prefoldin subunit beta family. As to quaternary structure, heterohexamer of two PFD-alpha type and four PFD-beta type subunits. Component of the PAQosome complex which is responsible for the biogenesis of several protein complexes and which consists of R2TP complex members RUVBL1, RUVBL2, RPAP3 and PIH1D1, URI complex members PFDN2, PFDN6, PDRG1, UXT and URI1 as well as ASDURF, POLR2E and DNAAF10/WDR92.

In terms of biological role, binds specifically to cytosolic chaperonin (c-CPN) and transfers target proteins to it. Binds to nascent polypeptide chain and promotes folding in an environment in which there are many competing pathways for nonnative proteins. This is Prefoldin subunit 6 (PFDN6) from Homo sapiens (Human).